A 432-amino-acid polypeptide reads, in one-letter code: D-amino acid dehydrogenase (432 aa).

3-17 provides a ligand contact to FAD; it reads VVILGSGVVGVTSAW.

It belongs to the DadA oxidoreductase family. The cofactor is FAD.

The protein localises to the cell inner membrane. It carries out the reaction a D-alpha-amino acid + A + H2O = a 2-oxocarboxylate + AH2 + NH4(+). It functions in the pathway amino-acid degradation; D-alanine degradation; NH(3) and pyruvate from D-alanine: step 1/1. Its function is as follows. Oxidative deamination of D-amino acids. This Salmonella typhi protein is D-amino acid dehydrogenase.